A 398-amino-acid polypeptide reads, in one-letter code: Bifunctional enzyme IspD/IspF (398 aa).

Residues 1-237 (MSISIAAIIL…QKKMQMFPDI (237 aa)) are 2-C-methyl-D-erythritol 4-phosphate cytidylyltransferase. Residues 238–398 (RVGNGYDVHS…SVLYPGEIPQ (161 aa)) are 2-C-methyl-D-erythritol 2,4-cyclodiphosphate synthase. Residues aspartate 244 and histidine 246 each coordinate a divalent metal cation. 4-CDP-2-C-methyl-D-erythritol 2-phosphate contacts are provided by residues 244 to 246 (DVH) and 270 to 271 (HS). Histidine 278 contacts a divalent metal cation. 4-CDP-2-C-methyl-D-erythritol 2-phosphate-binding positions include 292–294 (DIG), 368–371 (TTNE), phenylalanine 375, and arginine 378.

This sequence in the N-terminal section; belongs to the IspD/TarI cytidylyltransferase family. IspD subfamily. The protein in the C-terminal section; belongs to the IspF family. A divalent metal cation is required as a cofactor.

The enzyme catalyses 2-C-methyl-D-erythritol 4-phosphate + CTP + H(+) = 4-CDP-2-C-methyl-D-erythritol + diphosphate. It catalyses the reaction 4-CDP-2-C-methyl-D-erythritol 2-phosphate = 2-C-methyl-D-erythritol 2,4-cyclic diphosphate + CMP. The protein operates within isoprenoid biosynthesis; isopentenyl diphosphate biosynthesis via DXP pathway; isopentenyl diphosphate from 1-deoxy-D-xylulose 5-phosphate: step 2/6. It participates in isoprenoid biosynthesis; isopentenyl diphosphate biosynthesis via DXP pathway; isopentenyl diphosphate from 1-deoxy-D-xylulose 5-phosphate: step 4/6. Bifunctional enzyme that catalyzes the formation of 4-diphosphocytidyl-2-C-methyl-D-erythritol from CTP and 2-C-methyl-D-erythritol 4-phosphate (MEP) (IspD), and catalyzes the conversion of 4-diphosphocytidyl-2-C-methyl-D-erythritol 2-phosphate (CDP-ME2P) to 2-C-methyl-D-erythritol 2,4-cyclodiphosphate (ME-CPP) with a corresponding release of cytidine 5-monophosphate (CMP) (IspF). This Bartonella tribocorum (strain CIP 105476 / IBS 506) protein is Bifunctional enzyme IspD/IspF.